We begin with the raw amino-acid sequence, 524 residues long: 2-isopropylmalate synthase (524 aa).

In terms of domain architecture, Pyruvate carboxyltransferase spans 15–275 (VVVFDTTMRD…PYGTSVDPVH (261 aa)). Residues Asp24, His212, His214, and Asn248 each coordinate Mn(2+). The interval 401–524 (RVSRLRVVAG…RPEAAIASGF (124 aa)) is regulatory domain.

It belongs to the alpha-IPM synthase/homocitrate synthase family. LeuA type 1 subfamily. As to quaternary structure, homodimer. The cofactor is Mn(2+).

The protein localises to the cytoplasm. The catalysed reaction is 3-methyl-2-oxobutanoate + acetyl-CoA + H2O = (2S)-2-isopropylmalate + CoA + H(+). The protein operates within amino-acid biosynthesis; L-leucine biosynthesis; L-leucine from 3-methyl-2-oxobutanoate: step 1/4. Catalyzes the condensation of the acetyl group of acetyl-CoA with 3-methyl-2-oxobutanoate (2-ketoisovalerate) to form 3-carboxy-3-hydroxy-4-methylpentanoate (2-isopropylmalate). In Caulobacter vibrioides (strain ATCC 19089 / CIP 103742 / CB 15) (Caulobacter crescentus), this protein is 2-isopropylmalate synthase.